The chain runs to 386 residues: Chaperone protein DnaJ (386 aa).

The J domain maps to 3–68 (DYYEILEVAR…KKRQVYDRYG (66 aa)). The CR-type zinc-finger motif lies at 146–224 (GVDKELVISN…CKGQGAVKEK (79 aa)). Cysteine 159, cysteine 162, cysteine 176, cysteine 179, cysteine 198, cysteine 201, cysteine 212, and cysteine 215 together coordinate Zn(2+). CXXCXGXG motif repeat units lie at residues 159 to 166 (CNVCNGKG), 176 to 183 (CSECKGRG), 198 to 205 (CPKCHGEG), and 212 to 219 (CKNCKGQG).

It belongs to the DnaJ family. In terms of assembly, homodimer. Zn(2+) is required as a cofactor.

The protein localises to the cytoplasm. Participates actively in the response to hyperosmotic and heat shock by preventing the aggregation of stress-denatured proteins and by disaggregating proteins, also in an autonomous, DnaK-independent fashion. Unfolded proteins bind initially to DnaJ; upon interaction with the DnaJ-bound protein, DnaK hydrolyzes its bound ATP, resulting in the formation of a stable complex. GrpE releases ADP from DnaK; ATP binding to DnaK triggers the release of the substrate protein, thus completing the reaction cycle. Several rounds of ATP-dependent interactions between DnaJ, DnaK and GrpE are required for fully efficient folding. Also involved, together with DnaK and GrpE, in the DNA replication of plasmids through activation of initiation proteins. This Protochlamydia amoebophila (strain UWE25) protein is Chaperone protein DnaJ.